The following is a 264-amino-acid chain: NADH dehydrogenase [ubiquinone] iron-sulfur protein 3, mitochondrial (264 aa).

The N-terminal 36 residues, 1–36, are a transit peptide targeting the mitochondrion; that stretch reads MAAAAVARLWWRGILGASALTRGTGRPSVLLLPVRR.

This sequence belongs to the complex I 30 kDa subunit family. In terms of assembly, core subunit of respiratory chain NADH dehydrogenase (Complex I) which is composed of 45 different subunits. Interacts with NDUFAF3. Interacts with RAB5IF. Found in subcomplexes containing subunits NDUFS2, MT-ND1 and NDUFA13.

The protein localises to the mitochondrion inner membrane. The enzyme catalyses a ubiquinone + NADH + 5 H(+)(in) = a ubiquinol + NAD(+) + 4 H(+)(out). In terms of biological role, core subunit of the mitochondrial membrane respiratory chain NADH dehydrogenase (Complex I) which catalyzes electron transfer from NADH through the respiratory chain, using ubiquinone as an electron acceptor. Essential for the catalytic activity and assembly of complex I. This chain is NADH dehydrogenase [ubiquinone] iron-sulfur protein 3, mitochondrial (NDUFS3), found in Pan troglodytes (Chimpanzee).